The primary structure comprises 607 residues: DNA mismatch repair protein MutL (607 aa).

Belongs to the DNA mismatch repair MutL/HexB family.

This protein is involved in the repair of mismatches in DNA. It is required for dam-dependent methyl-directed DNA mismatch repair. May act as a 'molecular matchmaker', a protein that promotes the formation of a stable complex between two or more DNA-binding proteins in an ATP-dependent manner without itself being part of a final effector complex. In Anaeromyxobacter sp. (strain K), this protein is DNA mismatch repair protein MutL.